The chain runs to 365 residues: Protein RecA (365 aa).

73–80 provides a ligand contact to ATP; sequence GPESSGKT.

Belongs to the RecA family.

The protein localises to the cytoplasm. In terms of biological role, can catalyze the hydrolysis of ATP in the presence of single-stranded DNA, the ATP-dependent uptake of single-stranded DNA by duplex DNA, and the ATP-dependent hybridization of homologous single-stranded DNAs. It interacts with LexA causing its activation and leading to its autocatalytic cleavage. This chain is Protein RecA, found in Prochlorococcus marinus (strain MIT 9312).